Reading from the N-terminus, the 850-residue chain is Elongation factor 2 (850 aa).

One can recognise a tr-type G domain in the interval 17 to 351; that stretch reads KNIRNISVIA…QIALKLPSPL (335 aa). Residues 26–33, 159–162, and 213–215 contribute to the GTP site; these read AHVDHGKS, NKLD, and SGL. His-707 carries the post-translational modification Diphthamide.

It belongs to the TRAFAC class translation factor GTPase superfamily. Classic translation factor GTPase family. EF-G/EF-2 subfamily.

It is found in the cytoplasm. It carries out the reaction GTP + H2O = GDP + phosphate + H(+). The protein operates within protein biosynthesis; polypeptide chain elongation. In terms of biological role, catalyzes the GTP-dependent ribosomal translocation step during translation elongation. During this step, the ribosome changes from the pre-translocational (PRE) to the post-translocational (POST) state as the newly formed A-site-bound peptidyl-tRNA and P-site-bound deacylated tRNA move to the P and E sites, respectively. Catalyzes the coordinated movement of the two tRNA molecules, the mRNA and conformational changes in the ribosome. The sequence is that of Elongation factor 2 (EFT1) from Encephalitozoon cuniculi (strain GB-M1) (Microsporidian parasite).